We begin with the raw amino-acid sequence, 420 residues long: Napsin-A (420 aa).

Positions 1–25 (MSPPPLLQPLLLLLPLLNVEPSGAT) are cleaved as a signal peptide. Positions 26 to 63 (LIRIPLHRVQPGRRILNLLRGWREPAELPKLGAPSPGD) are cleaved as a propeptide — activation peptide. A Peptidase A1 domain is found at 78 to 399 (YFGEIGLGTP…MKSSARVGLA (322 aa)). The N-linked (GlcNAc...) asparagine glycan is linked to N90. D96 is a catalytic residue. C109 and C116 are disulfide-bonded. N133 carries an N-linked (GlcNAc...) asparagine glycan. A disulfide bridge links C274 with C278. D283 is an active-site residue. A disulfide bond links C317 and C354. A glycan (N-linked (GlcNAc...) asparagine) is linked at N336.

Belongs to the peptidase A1 family. In terms of tissue distribution, expressed predominantly in adult lung (type II pneumocytes) and kidney and in fetal lung. Low levels in adult spleen and very low levels in peripheral blood leukocytes.

The protein localises to the secreted. Functionally, may be involved in processing of pneumocyte surfactant precursors. The sequence is that of Napsin-A (NAPSA) from Homo sapiens (Human).